Here is a 130-residue protein sequence, read N- to C-terminus: Ribonuclease P protein component (130 aa).

The protein belongs to the RnpA family. Consists of a catalytic RNA component (M1 or rnpB) and a protein subunit.

It catalyses the reaction Endonucleolytic cleavage of RNA, removing 5'-extranucleotides from tRNA precursor.. Its function is as follows. RNaseP catalyzes the removal of the 5'-leader sequence from pre-tRNA to produce the mature 5'-terminus. It can also cleave other RNA substrates such as 4.5S RNA. The protein component plays an auxiliary but essential role in vivo by binding to the 5'-leader sequence and broadening the substrate specificity of the ribozyme. This is Ribonuclease P protein component from Azotobacter vinelandii (strain DJ / ATCC BAA-1303).